We begin with the raw amino-acid sequence, 329 residues long: MDPSKVKIPPMKDLTVDNITENVIRINSLCQDERLKYVLERLVTHLHDFARETRLSTDEWMTGLRFLTEVGKICSDVRQEYILLSDILGLSILVDSIDHPKPPNSTEGTVLGPFHTHDAEPLTPGASISHDPAGEPLLVVCTVKDTHGNPVSDVKIDIWETDSTGHYDVQYAGRDGPDGRCIMTSDKEGVFWFKAITPVPYPIPHDGPVGKLLKLLGRHPYRPSHMHFMFEKGGFDHLITALYLRNDPYETSDAVFGVKDSLVVDIGKAGPEYAAKYGVSEDHALLTYDFVLVSDEETSELRARNSKEALDKLGRKVKIVNGLPVPDLD.

Fe cation-binding residues include Tyr-167, Tyr-201, His-225, and His-227.

The protein belongs to the intradiol ring-cleavage dioxygenase family. Homodimer. The cofactor is Fe(3+).

The catalysed reaction is catechol + O2 = cis,cis-muconate + 2 H(+). It carries out the reaction benzene-1,2,4-triol + O2 = maleylacetate + 2 H(+). Its function is as follows. Intradiol ring-cleavage dioxygenase involved in an alternative pathway to the protocatechuic acid pathway since it is active on hydroxyquinol and catechol but not on protocatechuic acid. The chain is Intradiol ring-cleavage dioxygenase hqdA from Aspergillus niger (strain ATCC MYA-4892 / CBS 513.88 / FGSC A1513).